We begin with the raw amino-acid sequence, 389 residues long: 1-deoxy-D-xylulose 5-phosphate reductoisomerase (389 aa).

NADPH contacts are provided by Ser-11, Gly-12, Ser-13, Val-14, Asn-39, and Asn-122. Position 123 (Lys-123) interacts with 1-deoxy-D-xylulose 5-phosphate. Glu-124 is an NADPH binding site. Residue Asp-148 coordinates Mn(2+). Ser-149, Glu-150, Ser-174, and His-197 together coordinate 1-deoxy-D-xylulose 5-phosphate. Position 150 (Glu-150) interacts with Mn(2+). Position 203 (Gly-203) interacts with NADPH. Positions 210, 215, 216, and 219 each coordinate 1-deoxy-D-xylulose 5-phosphate. A Mn(2+)-binding site is contributed by Glu-219.

Belongs to the DXR family. The cofactor is Mg(2+). Mn(2+) serves as cofactor.

The enzyme catalyses 2-C-methyl-D-erythritol 4-phosphate + NADP(+) = 1-deoxy-D-xylulose 5-phosphate + NADPH + H(+). It functions in the pathway isoprenoid biosynthesis; isopentenyl diphosphate biosynthesis via DXP pathway; isopentenyl diphosphate from 1-deoxy-D-xylulose 5-phosphate: step 1/6. In terms of biological role, catalyzes the NADPH-dependent rearrangement and reduction of 1-deoxy-D-xylulose-5-phosphate (DXP) to 2-C-methyl-D-erythritol 4-phosphate (MEP). This Leptospira interrogans serogroup Icterohaemorrhagiae serovar copenhageni (strain Fiocruz L1-130) protein is 1-deoxy-D-xylulose 5-phosphate reductoisomerase.